The chain runs to 310 residues: Regulator of microtubule dynamics protein 1 (310 aa).

Position 165 is an N6-succinyllysine (Lys165). TPR repeat units follow at residues 168–204 and 222–258; these read AICI…NPKD and PWYQ…DPNF.

It belongs to the RMDN family. In terms of assembly, interacts with microtubules.

The protein localises to the cytoplasm. It is found in the cytoskeleton. Its subcellular location is the spindle. The protein resides in the spindle pole. The sequence is that of Regulator of microtubule dynamics protein 1 (Rmdn1) from Rattus norvegicus (Rat).